A 610-amino-acid polypeptide reads, in one-letter code: MGLKAAQKTLFPLRSIDDVVRLFAAELGREEPDLVLLSLVLGFVEHFLAVNRVIPTNVPELTFQPSPAPDPPGGLTYFPVADLSIIAALYARFTAQIRGAVDLSLYPREGGVSSRELVKKVSDVIWNSLSRSYFKDRAHIQSLFSFITGTKLDSSGVAFAVVGACQALGLRDVHLALSEDHAWVVFGSNGEQTAEVTWHGKGNEDRRGQTVNAGVAERSWLYLKGSYMRCDRKMEVAFMVCAINPSIDLHTDSLELLQLQQKLLWLLYDLGHLERYPMALGNLADLEELEPTPGRPDPLTLYHKGIASAKTYYQDEHIYPYMYLAGYHCRNRNVREALQAWADTATVIQDYNYCREDEEIYKEFFEVANDVIPNLLKEAASLLEAGEERPGEQAQGTQGQGSALQDPECFAHLLRFYDGICKWEEGSPTPVLHVGWATFLVQSLGRFEGQVRQKVHIVSREAEAAEAEEPWGDEAREGRRRGPRRESKPEEPPPPKKPALDKGPGSGQSAGSGPPRKTSGTVSGTARGTEVSSAAQAPAPAASPPPEGPVLTFQSEKMKGMKELLVATKINSSAIKLQLTAQSQVQMKKQKVSTPSDYTLSFLKRQRKGL.

Residues 214-390 (GVAERSWLYL…SLLEAGEERP (177 aa)) form an interaction with FANCD2 region. Positions 460 to 552 (REAEAAEAEE…SPPPEGPVLT (93 aa)) are disordered. Over residues 484 to 500 (RRESKPEEPPPPKKPAL) the composition is skewed to basic and acidic residues. Residues serine 487 and serine 543 each carry the phosphoserine modification. A Phosphothreonine modification is found at threonine 594.

As to quaternary structure, component of the MLL-HCF complex, at least composed of KMT2A/MLL1, MEN1, ASH2L, RBBP5, DPY30, WDR5, HCFC1 and HCFC2. Component of the menin-associated histone methyltransferase complex, at least composed of KMT2B/MLL4, MEN1, ASH2L, RBBP5, DPY30 and WDR5. Interacts with POLR2B. Interacts with POLR2A phosphorylated at 'Ser-5', but not with the unphosphorylated, nor 'Ser-2' phosphorylated POLR2A forms. Interacts with FANCD2 and DBF4. Interacts with SMAD3, but not with SMAD2, nor SMAD4. Directly interacts with NFKB1, NFKB2 and RELA. Interacts with JUND (via MBM motif); inhibits the interaction of JUND with MAPK10 and the phosphorylation of JUND by MAP kinases MAPK8 and MAPK10. Interacts with KMT2A (via MBM motif). The KMT2A-MEN1 complex interacts with PSIP1 with a greater affinity as MEN1 enhances interaction of KMT2A with PSIP1. Widely expressed, including in the pituitary, brain, large intestine, spleen, kidney, adrenal gland, ovary, testis, thymus, lung, epididymis, bone marrow, pancreatic islets and placenta.

The protein resides in the nucleus. Functionally, essential component of a MLL/SET1 histone methyltransferase (HMT) complex, a complex that specifically methylates 'Lys-4' of histone H3 (H3K4). Functions as a transcriptional regulator. Binds to the TERT promoter and represses telomerase expression. Represses JUND-mediated transcriptional activation on AP1 sites, as well as that mediated by NFKB subunit RELA. Positively regulates HOXC8 and HOXC6 gene expression. May be involved in normal hematopoiesis through the activation of HOXA9 expression. May be involved in DNA repair. Plays a role in TGFB1-mediated inhibition of cell-proliferation, possibly regulating SMAD3 transcriptional activity. This chain is Menin (Men1), found in Rattus norvegicus (Rat).